The chain runs to 500 residues: MNNFPWLTAILLLPISAGSSILFIPQRGNKAVRWYTICICLLELLLMTYVFYYNFQLDDPLIQLEEDCNWINLFDFHWRLGIDGLSIGPILLTGFITTLATSAAWPVTRNSRLFHFLMLAMYSGQIGSFSSRDLLLFFIMWELELIPVYLLLSMWGGKKRLYSATKFILYTAGGSIFLLIGVLGMGLYSSNQPMLNFETSANQSYPVGLEILFYFGFLIAYAAKPPIIPLHTWLPDTHGEAHYSTCMLLAGILLKMGAYGLVRINMELLPHAHSLFSPWLVIVGTLQIIYAASTSLGQRNLKKRIAYSSVSHMGSTIIGIGSMTDTALNGAILQIISHGFIGAALFFLAGTSYDRIRFLYLDEMGGIAIPMPKIFTMFSIFSMASLASPGMSGFVAEFLVFLGIITSPKYLFIPKILITVVMAIGMILTPIYLLSMSRQMFYGYKLFNVPNSYFVDSGPREIFILISILLPVMGIGIYPDFVLSLSVDKVEAILANYFNG.

Transmembrane regions (helical) follow at residues 4–24 (FPWL…ILFI), 37–57 (ICIC…NFQL), 80–100 (LGID…TTLA), 134–154 (LLLF…LLSM), 167–187 (FILY…GMGL), 208–228 (GLEI…PPII), 242–262 (HYST…YGLV), 272–292 (AHSL…IYAA), 330–350 (GAIL…FLAG), 386–406 (LASP…GIIT), 416–436 (ILIT…LLSM), and 462–482 (IFIL…PDFV).

This sequence belongs to the complex I subunit 4 family.

It localises to the plastid. Its subcellular location is the chloroplast thylakoid membrane. It catalyses the reaction a plastoquinone + NADH + (n+1) H(+)(in) = a plastoquinol + NAD(+) + n H(+)(out). The catalysed reaction is a plastoquinone + NADPH + (n+1) H(+)(in) = a plastoquinol + NADP(+) + n H(+)(out). The polypeptide is NAD(P)H-quinone oxidoreductase chain 4, chloroplastic (Amborella trichopoda).